A 112-amino-acid polypeptide reads, in one-letter code: DNA-directed RNA polymerase subunit Rpo11 (112 aa).

This sequence belongs to the archaeal Rpo11/eukaryotic RPB11/RPC19 RNA polymerase subunit family. As to quaternary structure, part of the RNA polymerase complex.

It localises to the cytoplasm. The catalysed reaction is RNA(n) + a ribonucleoside 5'-triphosphate = RNA(n+1) + diphosphate. Its function is as follows. DNA-dependent RNA polymerase (RNAP) catalyzes the transcription of DNA into RNA using the four ribonucleoside triphosphates as substrates. This chain is DNA-directed RNA polymerase subunit Rpo11, found in Methanopyrus kandleri (strain AV19 / DSM 6324 / JCM 9639 / NBRC 100938).